Here is a 72-residue protein sequence, read N- to C-terminus: Translation initiation factor IF-1 (72 aa).

Positions 1 to 72 (MSKEDLIEFT…SKGRITFRFK (72 aa)) constitute an S1-like domain.

The protein belongs to the IF-1 family. In terms of assembly, component of the 30S ribosomal translation pre-initiation complex which assembles on the 30S ribosome in the order IF-2 and IF-3, IF-1 and N-formylmethionyl-tRNA(fMet); mRNA recruitment can occur at any time during PIC assembly.

The protein localises to the cytoplasm. Its function is as follows. One of the essential components for the initiation of protein synthesis. Stabilizes the binding of IF-2 and IF-3 on the 30S subunit to which N-formylmethionyl-tRNA(fMet) subsequently binds. Helps modulate mRNA selection, yielding the 30S pre-initiation complex (PIC). Upon addition of the 50S ribosomal subunit IF-1, IF-2 and IF-3 are released leaving the mature 70S translation initiation complex. In Gluconobacter oxydans (strain 621H) (Gluconobacter suboxydans), this protein is Translation initiation factor IF-1.